A 237-amino-acid chain; its full sequence is Uracil-DNA glycosylase (237 aa).

Catalysis depends on Asp-77, which acts as the Proton acceptor.

This sequence belongs to the uracil-DNA glycosylase (UDG) superfamily. UNG family.

It localises to the cytoplasm. It catalyses the reaction Hydrolyzes single-stranded DNA or mismatched double-stranded DNA and polynucleotides, releasing free uracil.. In terms of biological role, excises uracil residues from the DNA which can arise as a result of misincorporation of dUMP residues by DNA polymerase or due to deamination of cytosine. The chain is Uracil-DNA glycosylase from Acinetobacter baumannii (strain ACICU).